A 368-amino-acid chain; its full sequence is Probable dual-specificity RNA methyltransferase RlmN (368 aa).

The Proton acceptor role is filled by Glu109. Residues 115–355 (YPDRVTMCIS…VTVRDTRGQE (241 aa)) enclose the Radical SAM core domain. Cys122 and Cys360 are oxidised to a cystine. [4Fe-4S] cluster contacts are provided by Cys129, Cys133, and Cys136. S-adenosyl-L-methionine contacts are provided by residues 184 to 185 (GE), Ser218, 241 to 243 (SLH), and Asn317. Cys360 acts as the S-methylcysteine intermediate in catalysis.

It belongs to the radical SAM superfamily. RlmN family. Requires [4Fe-4S] cluster as cofactor.

The protein localises to the cytoplasm. It carries out the reaction adenosine(2503) in 23S rRNA + 2 reduced [2Fe-2S]-[ferredoxin] + 2 S-adenosyl-L-methionine = 2-methyladenosine(2503) in 23S rRNA + 5'-deoxyadenosine + L-methionine + 2 oxidized [2Fe-2S]-[ferredoxin] + S-adenosyl-L-homocysteine. It catalyses the reaction adenosine(37) in tRNA + 2 reduced [2Fe-2S]-[ferredoxin] + 2 S-adenosyl-L-methionine = 2-methyladenosine(37) in tRNA + 5'-deoxyadenosine + L-methionine + 2 oxidized [2Fe-2S]-[ferredoxin] + S-adenosyl-L-homocysteine. Its function is as follows. Specifically methylates position 2 of adenine 2503 in 23S rRNA and position 2 of adenine 37 in tRNAs. The chain is Probable dual-specificity RNA methyltransferase RlmN from Streptomyces griseus subsp. griseus (strain JCM 4626 / CBS 651.72 / NBRC 13350 / KCC S-0626 / ISP 5235).